Consider the following 470-residue polypeptide: Argininosuccinate lyase (470 aa).

It belongs to the lyase 1 family. Argininosuccinate lyase subfamily.

It is found in the cytoplasm. It carries out the reaction 2-(N(omega)-L-arginino)succinate = fumarate + L-arginine. It functions in the pathway amino-acid biosynthesis; L-arginine biosynthesis; L-arginine from L-ornithine and carbamoyl phosphate: step 3/3. This Mycolicibacterium gilvum (strain PYR-GCK) (Mycobacterium gilvum (strain PYR-GCK)) protein is Argininosuccinate lyase.